Consider the following 150-residue polypeptide: Ribonuclease HI (150 aa).

Positions 1–141 constitute an RNase H type-1 domain; sequence MKSINAYTDG…VDVLARGQAM (141 aa). Aspartate 9, glutamate 47, aspartate 69, and aspartate 133 together coordinate Mg(2+).

Belongs to the RNase H family. In terms of assembly, monomer. Requires Mg(2+) as cofactor.

It localises to the cytoplasm. The catalysed reaction is Endonucleolytic cleavage to 5'-phosphomonoester.. Its function is as follows. Endonuclease that specifically degrades the RNA of RNA-DNA hybrids. This is Ribonuclease HI from Xylella fastidiosa (strain 9a5c).